A 274-amino-acid polypeptide reads, in one-letter code: Protein bax (274 aa).

Over residues 32–64 (TTASQKSHLTKASNKQVSSKQEYSRNSAKSSSL) the composition is skewed to polar residues. The tract at residues 32 to 74 (TTASQKSHLTKASNKQVSSKQEYSRNSAKSSSLPDLRKYPSGT) is disordered. Position 247–254 (247–254 (GYSTKGKS)) interacts with ATP.

The sequence is that of Protein bax (bax) from Escherichia coli (strain K12).